We begin with the raw amino-acid sequence, 162 residues long: Caveolin-2 (162 aa).

The Cytoplasmic portion of the chain corresponds to 1–86 (MGLETEKADV…FEMSKYVIYK (86 aa)). Y19 carries the phosphotyrosine; by SRC modification. Phosphoserine occurs at positions 20 and 23. At Y27 the chain carries Phosphotyrosine; by SRC. The helical intramembrane region spans 87 to 107 (FLTVFLAIPLAFAAGILFATL). The Cytoplasmic portion of the chain corresponds to 108 to 162 (SCLHIWIIMPFVKTCLMVLPSVQTIWKSVTDVVIAPLCTSIGRSFSSVSLQLSHD).

Belongs to the caveolin family. In terms of assembly, monomer or homodimer. Interacts with CAV1; the interaction forms a stable heterooligomeric complex that is required for targeting to lipid rafts and for caveolae formation. Tyrosine phosphorylated forms do not form heterooligomers with the Tyr-19-phosphorylated form existing as a monomer or dimer, and the Tyr-27-form as a monomer only. Interacts (tyrosine phosphorylated form) with the SH2 domain-containing proteins, RASA1, NCK1 and SRC. Interacts (tyrosine phosphorylated form) with INSR, the interaction (Tyr-27-phosphorylated form) is increased on insulin stimulation. Interacts (Tyr-19 phosphorylated form) with MAPK1 (phosphorylated form); the interaction, promoted by insulin, leads to nuclear location and MAPK1 activation. Interacts with STAT3; the interaction is increased on insulin-induced tyrosine phosphorylation leading to STAT activation. Phosphorylated on serine and tyrosine residues. CAV1 promotes phosphorylation on Ser-23 which then targets the complex to the plasma membrane, lipid rafts and caveolae. Phosphorylation on both Tyr-19 and Tyr-27 is required for insulin-induced 'Ser-727' phosphorylation of STAT3 and its activation. Phosphorylation on Tyr-19 is required for insulin-induced phosphorylation of MAPK1 and DNA binding of STAT3. Tyrosine phosphorylation is induced by both EGF and insulin. As to expression, expressed in aortic endothelial cells.

It is found in the nucleus. The protein resides in the cytoplasm. It localises to the golgi apparatus membrane. The protein localises to the cell membrane. Its subcellular location is the membrane. It is found in the caveola. Functionally, may act as a scaffolding protein within caveolar membranes. Interacts directly with G-protein alpha subunits and can functionally regulate their activity. Acts as an accessory protein in conjunction with CAV1 in targeting to lipid rafts and driving caveolae formation. Positive regulator of cellular mitogenesis of the MAPK signaling pathway. Required for the insulin-stimulated nuclear translocation and activation of MAPK1 and STAT3, and the subsequent regulation of cell cycle progression. The sequence is that of Caveolin-2 (CAV2) from Bos taurus (Bovine).